We begin with the raw amino-acid sequence, 192 residues long: Large ribosomal subunit protein uL10 (192 aa).

It belongs to the universal ribosomal protein uL10 family. Part of the ribosomal stalk of the 50S ribosomal subunit. The N-terminus interacts with L11 and the large rRNA to form the base of the stalk. The C-terminus forms an elongated spine to which L12 dimers bind in a sequential fashion forming a multimeric L10(L12)X complex.

Functionally, forms part of the ribosomal stalk, playing a central role in the interaction of the ribosome with GTP-bound translation factors. The chain is Large ribosomal subunit protein uL10 from Gloeobacter violaceus (strain ATCC 29082 / PCC 7421).